The following is an 876-amino-acid chain: Probable galactinol--sucrose galactosyltransferase 4 (876 aa).

Residues S7 and S9 each carry the phosphoserine modification.

It belongs to the glycosyl hydrolases 36 family.

It carries out the reaction alpha-D-galactosyl-(1-&gt;3)-1D-myo-inositol + sucrose = raffinose + myo-inositol. Functionally, transglycosidase operating by a ping-pong reaction mechanism. Involved in the synthesis of raffinose, a major soluble carbohydrate in seeds, roots and tubers. The chain is Probable galactinol--sucrose galactosyltransferase 4 (RFS4) from Arabidopsis thaliana (Mouse-ear cress).